The primary structure comprises 677 residues: High-affinity choline transport protein (677 aa).

A run of 12 helical transmembrane segments spans residues 15–35, 54–74, 94–114, 144–164, 196–216, 233–253, 265–285, 319–339, 350–370, 412–432, 452–472, and 477–497; these read PVVFYTSAGLILLFSLTTILF, FGWYYLLAATLYIVFVVCIAC, LSWAAMLFAAGIGIDLMFFSV, FHYGLTGWSMYALMGMALGYF, IAAVIGTIFGIATTLGIGVVQ, AKAALIALSVIIATISVTSGV, VALALGLILFVLFMGDTSFLL, WTLFFWAWWVAWSPFVGLFLA, FVLGTLIIPFTFTLLWLSVFG, VATITGLLFYVTSADSGALVL, VFWSVAIGLLTLGMLMTNGIS, and TTVIMGLPFSFVIFFVMAGLY.

It belongs to the BCCT transporter (TC 2.A.15) family.

The protein resides in the cell inner membrane. It catalyses the reaction choline(in) + H(+)(in) = choline(out) + H(+)(out). The protein operates within amine and polyamine biosynthesis; betaine biosynthesis via choline pathway. Functionally, high-affinity uptake of choline driven by a proton-motive force. The chain is High-affinity choline transport protein (betT) from Escherichia coli O157:H7.